The sequence spans 1228 residues: DNA-directed RNA polymerase subunit beta (1228 aa).

The disordered stretch occupies residues E1175–K1204. Residues G1192 to D1202 are compositionally biased toward acidic residues.

It belongs to the RNA polymerase beta chain family. As to quaternary structure, the RNAP catalytic core consists of 2 alpha, 1 beta, 1 beta' and 1 omega subunit. When a sigma factor is associated with the core the holoenzyme is formed, which can initiate transcription.

It carries out the reaction RNA(n) + a ribonucleoside 5'-triphosphate = RNA(n+1) + diphosphate. DNA-dependent RNA polymerase catalyzes the transcription of DNA into RNA using the four ribonucleoside triphosphates as substrates. The protein is DNA-directed RNA polymerase subunit beta of Caldicellulosiruptor bescii (strain ATCC BAA-1888 / DSM 6725 / KCTC 15123 / Z-1320) (Anaerocellum thermophilum).